Reading from the N-terminus, the 951-residue chain is Valine--tRNA ligase (951 aa).

The 'HIGH' region signature appears at 40 to 50 (PNVTGSLHMGH). Positions 551-555 (KMSKS) match the 'KMSKS' region motif. ATP is bound at residue K554. Positions 879 to 950 (MAGLIDVEAE…LLEQKAKIES (72 aa)) form a coiled coil.

It belongs to the class-I aminoacyl-tRNA synthetase family. ValS type 1 subfamily. As to quaternary structure, monomer.

Its subcellular location is the cytoplasm. The catalysed reaction is tRNA(Val) + L-valine + ATP = L-valyl-tRNA(Val) + AMP + diphosphate. Its function is as follows. Catalyzes the attachment of valine to tRNA(Val). As ValRS can inadvertently accommodate and process structurally similar amino acids such as threonine, to avoid such errors, it has a 'posttransfer' editing activity that hydrolyzes mischarged Thr-tRNA(Val) in a tRNA-dependent manner. This Pseudoalteromonas translucida (strain TAC 125) protein is Valine--tRNA ligase.